A 788-amino-acid chain; its full sequence is Phosphoribosylformylglycinamidine synthase subunit PurL (788 aa).

The active site involves H50. Y53 and K92 together coordinate ATP. E94 contacts Mg(2+). Substrate is bound by residues 95–98 and R117; that span reads SHNH. Catalysis depends on H96, which acts as the Proton acceptor. Mg(2+) is bound at residue D118. Q241 contributes to the substrate binding site. D269 serves as a coordination point for Mg(2+). 313-315 lines the substrate pocket; the sequence is ESQ. Residues D524 and G561 each coordinate ATP. Residue N562 coordinates Mg(2+). Position 564 (S564) interacts with substrate.

It belongs to the FGAMS family. Monomer. Part of the FGAM synthase complex composed of 1 PurL, 1 PurQ and 2 PurS subunits.

Its subcellular location is the cytoplasm. It catalyses the reaction N(2)-formyl-N(1)-(5-phospho-beta-D-ribosyl)glycinamide + L-glutamine + ATP + H2O = 2-formamido-N(1)-(5-O-phospho-beta-D-ribosyl)acetamidine + L-glutamate + ADP + phosphate + H(+). The protein operates within purine metabolism; IMP biosynthesis via de novo pathway; 5-amino-1-(5-phospho-D-ribosyl)imidazole from N(2)-formyl-N(1)-(5-phospho-D-ribosyl)glycinamide: step 1/2. Its function is as follows. Part of the phosphoribosylformylglycinamidine synthase complex involved in the purines biosynthetic pathway. Catalyzes the ATP-dependent conversion of formylglycinamide ribonucleotide (FGAR) and glutamine to yield formylglycinamidine ribonucleotide (FGAM) and glutamate. The FGAM synthase complex is composed of three subunits. PurQ produces an ammonia molecule by converting glutamine to glutamate. PurL transfers the ammonia molecule to FGAR to form FGAM in an ATP-dependent manner. PurS interacts with PurQ and PurL and is thought to assist in the transfer of the ammonia molecule from PurQ to PurL. This is Phosphoribosylformylglycinamidine synthase subunit PurL from Nostoc punctiforme (strain ATCC 29133 / PCC 73102).